Reading from the N-terminus, the 518-residue chain is Anthranilate synthase component 1 (518 aa).

Residues Ser38 and Pro283 to Met285 contribute to the L-tryptophan site. Gly324–Thr325 is a binding site for chorismate. Glu357 contributes to the Mg(2+) binding site. Chorismate-binding positions include Tyr445, Arg465, Gly479–Gly481, and Gly481. Glu494 contacts Mg(2+).

The protein belongs to the anthranilate synthase component I family. As to quaternary structure, heterotetramer consisting of two non-identical subunits: a beta subunit (TrpG) and a large alpha subunit (TrpE). The cofactor is Mg(2+).

The enzyme catalyses chorismate + L-glutamine = anthranilate + pyruvate + L-glutamate + H(+). It functions in the pathway amino-acid biosynthesis; L-tryptophan biosynthesis; L-tryptophan from chorismate: step 1/5. Feedback inhibited by tryptophan. Its function is as follows. Part of a heterotetrameric complex that catalyzes the two-step biosynthesis of anthranilate, an intermediate in the biosynthesis of L-tryptophan. In the first step, the glutamine-binding beta subunit (TrpG) of anthranilate synthase (AS) provides the glutamine amidotransferase activity which generates ammonia as a substrate that, along with chorismate, is used in the second step, catalyzed by the large alpha subunit of AS (TrpE) to produce anthranilate. In the absence of TrpG, TrpE can synthesize anthranilate directly from chorismate and high concentrations of ammonia. The protein is Anthranilate synthase component 1 (trpE) of Corynebacterium glutamicum (strain ATCC 13032 / DSM 20300 / JCM 1318 / BCRC 11384 / CCUG 27702 / LMG 3730 / NBRC 12168 / NCIMB 10025 / NRRL B-2784 / 534).